We begin with the raw amino-acid sequence, 83 residues long: Transmembrane protein EP84R (83 aa).

Helical transmembrane passes span 31–51 (VIGIILLVISLLLIFIGIIIL) and 59–79 (AGSVLVVLSLILGGGGFFLIY).

It belongs to the asfivirus EP84R family.

The protein resides in the virion membrane. The sequence is that of Transmembrane protein EP84R from Ornithodoros (relapsing fever ticks).